Reading from the N-terminus, the 63-residue chain is Putative alpha-neurotoxin RjAa9 (63 aa).

The LCN-type CS-alpha/beta domain occupies 1 to 60; sequence KEGYPVDWGNCKYECMSDEYCKDLCADRKATSGYCYKLNWSCYCKGLPDDSPIKTPGKCR. Cystine bridges form between cysteine 11–cysteine 59, cysteine 15–cysteine 35, cysteine 21–cysteine 42, and cysteine 25–cysteine 44.

It belongs to the long (4 C-C) scorpion toxin superfamily. Sodium channel inhibitor family. Alpha subfamily. As to expression, expressed by the venom gland.

It is found in the secreted. Alpha toxins bind voltage-independently at site-3 of sodium channels (Nav) and inhibits the inactivation of the activated channels, thereby blocking neuronal transmission. This chain is Putative alpha-neurotoxin RjAa9, found in Rhopalurus junceus (Caribbean blue scorpion).